Here is a 287-residue protein sequence, read N- to C-terminus: Ribosomal RNA small subunit methyltransferase A (287 aa).

Residues N28, L30, G55, E77, D103, and N123 each coordinate S-adenosyl-L-methionine.

This sequence belongs to the class I-like SAM-binding methyltransferase superfamily. rRNA adenine N(6)-methyltransferase family. RsmA subfamily.

Its subcellular location is the cytoplasm. It carries out the reaction adenosine(1518)/adenosine(1519) in 16S rRNA + 4 S-adenosyl-L-methionine = N(6)-dimethyladenosine(1518)/N(6)-dimethyladenosine(1519) in 16S rRNA + 4 S-adenosyl-L-homocysteine + 4 H(+). Specifically dimethylates two adjacent adenosines (A1518 and A1519) in the loop of a conserved hairpin near the 3'-end of 16S rRNA in the 30S particle. May play a critical role in biogenesis of 30S subunits. This chain is Ribosomal RNA small subunit methyltransferase A, found in Rhodopseudomonas palustris (strain TIE-1).